A 428-amino-acid chain; its full sequence is Histidine--tRNA ligase (428 aa).

The protein belongs to the class-II aminoacyl-tRNA synthetase family. In terms of assembly, homodimer.

The protein resides in the cytoplasm. The catalysed reaction is tRNA(His) + L-histidine + ATP = L-histidyl-tRNA(His) + AMP + diphosphate + H(+). In Chlamydia trachomatis serovar L2 (strain ATCC VR-902B / DSM 19102 / 434/Bu), this protein is Histidine--tRNA ligase.